A 95-amino-acid polypeptide reads, in one-letter code: Putative membrane protein insertion efficiency factor (95 aa).

The disordered stretch occupies residues 72-95; the sequence is FDPVPDAPTSPSPSSSCSCKGPHP. The segment covering 83–95 has biased composition (low complexity); it reads SPSSSCSCKGPHP.

Belongs to the UPF0161 family.

It is found in the cell inner membrane. Its function is as follows. Could be involved in insertion of integral membrane proteins into the membrane. This is Putative membrane protein insertion efficiency factor from Xanthomonas axonopodis pv. citri (strain 306).